A 34-amino-acid polypeptide reads, in one-letter code: Mytilin-A (34 aa).

Cystine bridges form between Cys2–Cys27, Cys6–Cys29, Cys10–Cys31, and Cys15–Cys34.

The protein localises to the secreted. Has antibacterial activity against A.viridans, B.megaterium, M.luteus, E.faecalis, S.aureus and E.coli. It is active against the marine species A.carrageenovora, P.alginovora and C.drobachiensis. This chain is Mytilin-A, found in Mytilus edulis (Blue mussel).